A 309-amino-acid polypeptide reads, in one-letter code: tRNA pseudouridine synthase B (309 aa).

Asp52 functions as the Nucleophile in the catalytic mechanism.

The protein belongs to the pseudouridine synthase TruB family. Type 1 subfamily.

It catalyses the reaction uridine(55) in tRNA = pseudouridine(55) in tRNA. Its function is as follows. Responsible for synthesis of pseudouridine from uracil-55 in the psi GC loop of transfer RNAs. This Leptospira interrogans serogroup Icterohaemorrhagiae serovar Lai (strain 56601) protein is tRNA pseudouridine synthase B.